The chain runs to 644 residues: Pentatricopeptide repeat-containing protein At1g12775, mitochondrial (644 aa).

The N-terminal 53 residues, 1–53 (MVRMMIRRLSSQASRFVQPRLLETGTLRIALINCPNELLFCCERGFSTFSDRN), are a transit peptide targeting the mitochondrion. PPR repeat units follow at residues 87 to 121 (TVIDFNRLFSAIAKTKQYELVLALCKQMESKGIAH), 122 to 156 (SIYTLSIMINCFCRCRKLSYAFSTMGKIMKLGYEP), 157 to 191 (DTVIFNTLLNGLCLECRVSEALELVDRMVEMGHKP), 192 to 226 (TLITLNTLVNGLCLNGKVSDAVVLIDRMVETGFQP), 227 to 261 (NEVTYGPVLNVMCKSGQTALAMELLRKMEERNIKL), 262 to 296 (DAVKYSIIIDGLCKDGSLDNAFNLFNEMEIKGFKA), 297 to 331 (DIITYNTLIGGFCNAGRWDDGAKLLRDMIKRKISP), 332 to 366 (NVVTFSVLIDSFVKEGKLREADQLLKEMMQRGIAP), 367 to 401 (NTITYNSLIDGFCKENRLEEAIQMVDLMISKGCDP), 402 to 436 (DIMTFNILINGYCKANRIDDGLELFREMSLRGVIA), 437 to 471 (NTVTYNTLVQGFCQSGKLEVAKKLFQEMVSRRVRP), 472 to 506 (DIVSYKILLDGLCDNGELEKALEIFGKIEKSKMEL), 507 to 541 (DIGIYMIIIHGMCNASKVDDAWDLFCSLPLKGVKL), 542 to 576 (DARAYNIMISELCRKDSLSKADILFRKMTEEGHAP), and 577 to 611 (DELTYNILIRAHLGDDDATTAAELIEEMKSSGFPA).

Belongs to the PPR family. P subfamily.

It localises to the mitochondrion. In Arabidopsis thaliana (Mouse-ear cress), this protein is Pentatricopeptide repeat-containing protein At1g12775, mitochondrial.